A 267-amino-acid chain; its full sequence is tRNA pseudouridine synthase A (267 aa).

Asp53 functions as the Nucleophile in the catalytic mechanism. Tyr111 provides a ligand contact to substrate.

This sequence belongs to the tRNA pseudouridine synthase TruA family. Homodimer.

The enzyme catalyses uridine(38/39/40) in tRNA = pseudouridine(38/39/40) in tRNA. Formation of pseudouridine at positions 38, 39 and 40 in the anticodon stem and loop of transfer RNAs. In Alcanivorax borkumensis (strain ATCC 700651 / DSM 11573 / NCIMB 13689 / SK2), this protein is tRNA pseudouridine synthase A.